A 320-amino-acid polypeptide reads, in one-letter code: Olfactory receptor 51E2 (320 aa).

Over 1–24 the chain is Extracellular; sequence MSSCNFTHATFVLIGIPGLEKAHF. Asn-5 is a glycosylation site (N-linked (GlcNAc...) asparagine). The chain crosses the membrane as a helical span at residues 25–45; that stretch reads WVGFPLLSMYVVAMFGNCIVV. The Cytoplasmic portion of the chain corresponds to 46-53; the sequence is FIVRTERS. Residues 54-74 form a helical membrane-spanning segment; that stretch reads LHAPMYLFLCMLAAIDLALST. Residues 75–98 are Extracellular-facing; that stretch reads STMPKILALFWFDSREISFEACLT. Cysteines 96 and 178 form a disulfide. Residues 99-119 traverse the membrane as a helical segment; that stretch reads QMFFIHALSAIESTILLAMAF. At 120–138 the chain is on the cytoplasmic side; that stretch reads DRYVAICHPLRHAAVLNNT. A helical transmembrane segment spans residues 139–159; sequence VTAQIGIVAVVRGSLFFFPLP. Residues 160-195 lie on the Extracellular side of the membrane; sequence LLIKRLAFCHSNVLSHSYCVHQDVMKLAYADTLPNV. A helical membrane pass occupies residues 196-216; that stretch reads VYGLTAILLVMGVDVMFISLS. The Cytoplasmic portion of the chain corresponds to 217-236; it reads YFLIIRTVLQLPSKSERAKA. The chain crosses the membrane as a helical span at residues 237–257; sequence FGTCVSHIGVVLAFYVPLIGL. At 258–272 the chain is on the extracellular side; that stretch reads SVVHRFGNSLHPIVR. A helical transmembrane segment spans residues 273–293; that stretch reads VVMGDIYLLLPPVINPIIYGA. The Cytoplasmic segment spans residues 294–320; that stretch reads KTKQIRTRVLAMFKISCDKDLQAVGGK.

It belongs to the G-protein coupled receptor 1 family. As to expression, highly expressed in the prostate. Also expressed in spleen, liver, olfactory epithelium, retinal pigment epithelium and medulla oblongata. In the retinal pigment epithelium expression is restricted to the pigment cells and choroid (at protein level). Expressed in epidermal melanocytes (at protein level).

The protein localises to the cell membrane. It localises to the early endosome membrane. In terms of biological role, olfactory receptor. Activated by the odorant, beta-ionone, a synthetic terpenoid. The activity of this receptor is probably mediated by G-proteins leading to the elevation of intracellular Ca(2+), cAMP and activation of the protein kinases PKA and MAPK3/MAPK1. Stimulation of OR51E2 by beta-ionone affects melanocyte proliferation, differentiation, and melanogenesis. Activation of OR51E2 by beta-ionone increases proliferation and migration of primary retinal pigment epithelial (RPE) cells. Activated also by the short-chain fatty acids (SCFA) acetate and propionate. In response to SCFA, may positively regulate renin secretion and increase blood pressure. May also be activated by steroid hormones and regulate cell proliferation. Activated by L-lactate in glomus cells. This Homo sapiens (Human) protein is Olfactory receptor 51E2.